The primary structure comprises 242 residues: Venom nerve growth factor 1 (242 aa).

Positions 1-18 (MSMLCYTLIIAFLIGIWA) are cleaved as a signal peptide. Residues 19 to 125 (APQSEDNVPL…ALNRNIQAKR (107 aa)) constitute a propeptide that is removed on maturation. 3 disulfide bridges follow: Cys139–Cys203, Cys181–Cys231, and Cys191–Cys233.

The protein belongs to the NGF-beta family. As to quaternary structure, homodimer; non-covalently linked. Expressed by the venom gland.

It is found in the secreted. Nerve growth factor is important for the development and maintenance of the sympathetic and sensory nervous systems. It stimulates division and differentiation of sympathetic and embryonic sensory neurons as well as basal forebrain cholinergic neurons in the brain. Its relevance in the snake venom is not clear. However, it has been shown to inhibit metalloproteinase-dependent proteolysis of platelet glycoprotein Ib alpha, suggesting a metalloproteinase inhibition to prevent metalloprotease autodigestion and/or protection against prey proteases. Binds a lipid between the two protein chains in the homodimer. The lipid-bound form promotes histamine relase from mouse mast cells, contrary to the lipid-free form. This chain is Venom nerve growth factor 1, found in Pseudechis australis (Mulga snake).